The chain runs to 914 residues: Ubiquitin carboxyl-terminal hydrolase 20 (914 aa).

The UBP-type zinc-finger motif lies at 6–111; sequence DLCPHLDSIG…GSSSKFSEQD (106 aa). Zn(2+) contacts are provided by cysteine 8, histidine 10, cysteine 30, cysteine 33, cysteine 43, cysteine 48, cysteine 53, histidine 60, histidine 64, histidine 70, cysteine 83, and cysteine 86. Serine 112, serine 132, and serine 134 each carry phosphoserine. Residues 145–685 enclose the USP domain; that stretch reads TGMKNLGNSC…EGYVLFYRKS (541 aa). Cysteine 154 functions as the Nucleophile in the catalytic mechanism. Disordered stretches follow at residues 257 to 347 and 360 to 415; these read LTEA…VDED and QPAE…ASPV. Residue threonine 258 is modified to Phosphothreonine. Positions 259–279 are enriched in basic and acidic residues; the sequence is EARDSDSSDTDEKREGDRSPS. Phosphoserine is present on serine 305. Basic and acidic residues predominate over residues 316–332; the sequence is EAGRAISEKERMKDRKF. A Phosphoserine modification is found at serine 368. Threonine 377 is modified (phosphothreonine). Phosphoserine occurs at positions 408 and 413. Catalysis depends on histidine 643, which acts as the Proton acceptor. DUSP domains follow at residues 687–780 and 789–892; these read EEAM…LYVC and ALAK…RQSV.

It belongs to the peptidase C19 family. USP20/USP33 subfamily. Interacts with VHL, leading to its ubiquitination and subsequent degradation. Interacts with CCP110. Interacts with DIO2. Interacts with HIF1A. Interacts with ADRB2. Interacts with USP18. In terms of processing, ubiquitinated via a VHL-dependent pathway for proteasomal degradation.

It localises to the cytoplasm. Its subcellular location is the endoplasmic reticulum. It is found in the perinuclear region. The protein resides in the cytoskeleton. The protein localises to the microtubule organizing center. It localises to the centrosome. The catalysed reaction is Thiol-dependent hydrolysis of ester, thioester, amide, peptide and isopeptide bonds formed by the C-terminal Gly of ubiquitin (a 76-residue protein attached to proteins as an intracellular targeting signal).. Its function is as follows. Deubiquitinating enzyme that plays a role in many cellular processes including autophagy, cellular antiviral response or membrane protein biogenesis. Attenuates TLR4-mediated NF-kappa-B signaling by cooperating with beta-arrestin-2/ARRB2 and inhibiting TRAF6 autoubiquitination. Promotes cellular antiviral responses by deconjugating 'Lys-33' and 'Lys-48'-linked ubiquitination of STING1 leading to its stabilization. Plays an essential role in autophagy induction by regulating the ULK1 stability through deubiquitination of ULK1. Acts as a positive regulator for NF-kappa-B activation by TNF-alpha through deubiquitinating 'Lys-48'-linked polyubiquitination of SQSTM1, leading to its increased stability. Acts as a regulator of G-protein coupled receptor (GPCR) signaling by mediating the deubiquitination beta-2 adrenergic receptor (ADRB2). Plays a central role in ADRB2 recycling and resensitization after prolonged agonist stimulation by constitutively binding ADRB2, mediating deubiquitination of ADRB2 and inhibiting lysosomal trafficking of ADRB2. Upon dissociation, it is probably transferred to the translocated beta-arrestins, possibly leading to beta-arrestins deubiquitination and disengagement from ADRB2. This suggests the existence of a dynamic exchange between the ADRB2 and beta-arrestins. Deubiquitinates DIO2, thereby regulating thyroid hormone regulation. Deubiquitinates HIF1A, leading to stabilize HIF1A and enhance HIF1A-mediated activity. Deubiquitinates MCL1, a pivotal member of the anti-apoptotic Bcl-2 protein family to regulate its stability. Within the endoplasmic reticulum, participates with USP33 in the rescue of post-translationally targeted membrane proteins that are inappropriately ubiquitinated by the cytosolic protein quality control in the cytosol. This chain is Ubiquitin carboxyl-terminal hydrolase 20 (USP20), found in Homo sapiens (Human).